Consider the following 484-residue polypeptide: Probable endopeptidase p60 (484 aa).

A signal peptide spans 1 to 27; it reads MNMKKATIAATAGIAVTAFAAPTIASA. One can recognise a LysM 1 domain in the interval 28-71; it reads STVVVEAGDTLWGIAQSKGTTVDAIKKANNLTTDKIVPGQKLQV. The SH3b domain occupies 80–144; the sequence is KTEKSVSATW…VNGKYLTDKA (65 aa). A disordered region spans residues 150–192; it reads APTQEVKKETTTQQAAPAAETKTEVKQTTQATTPAPKVAETKE. Low complexity predominate over residues 160-169; it reads TTQQAAPAAE. The LysM 2 domain occupies 201–244; sequence TTHAVKSGDTIWALSVKYGVSVQDIMSWNNLSSSSIYVGQKLAI. The disordered stretch occupies residues 254–367; sequence KAEVKTEAPA…QGSSNNNSNS (114 aa). 2 stretches are compositionally biased toward low complexity: residues 273–282 and 289–367; these read KENTNTNTAT and ATQQ…NSNS. Residues 311–355 are 19 X 2 AA tandem repeats of T-N; that stretch reads TNTNANKTNTNTNTNTNTNNTNTNTPSKNTNTNSNTNTNTNSNTN. A NlpC/P60 domain is found at 366–484; it reads NSSASAIIAE…GKYLVGFGRV (119 aa). The active-site Nucleophile is the C396. The active-site Proton acceptor is H446. N458 is a catalytic residue.

Belongs to the peptidase C40 family.

It localises to the cell surface. The protein resides in the secreted. This major extracellular protein may be involved in the invasion of non-professional phagocytic cells by Listeria. This chain is Probable endopeptidase p60 (iap), found in Listeria monocytogenes serovar 1/2a (strain ATCC BAA-679 / EGD-e).